A 155-amino-acid polypeptide reads, in one-letter code: Sec-independent protein translocase protein TatB (155 aa).

Residues 1–21 (MFGMGFFEILVVLVVAIIFLG) traverse the membrane as a helical segment. Residues 109–155 (SLENNAPPKHLNKEVSNREVFHNEPPKEIELIANNNTTKHDKEKEHV) form a disordered region. 2 stretches are compositionally biased toward basic and acidic residues: residues 119–138 (LNKE…KEIE) and 146–155 (TKHDKEKEHV).

The protein belongs to the TatB family. The Tat system comprises two distinct complexes: a TatABC complex, containing multiple copies of TatA, TatB and TatC subunits, and a separate TatA complex, containing only TatA subunits. Substrates initially bind to the TatABC complex, which probably triggers association of the separate TatA complex to form the active translocon.

The protein resides in the cell inner membrane. In terms of biological role, part of the twin-arginine translocation (Tat) system that transports large folded proteins containing a characteristic twin-arginine motif in their signal peptide across membranes. Together with TatC, TatB is part of a receptor directly interacting with Tat signal peptides. TatB may form an oligomeric binding site that transiently accommodates folded Tat precursor proteins before their translocation. This Helicobacter acinonychis (strain Sheeba) protein is Sec-independent protein translocase protein TatB.